Here is a 276-residue protein sequence, read N- to C-terminus: uncharacterized protein (276 aa).

The protein to E.coli YjfZ.

This is an uncharacterized protein from Escherichia coli (strain K12).